The chain runs to 258 residues: UPF0246 protein VV1_0535 (258 aa).

This sequence belongs to the UPF0246 family.

The protein is UPF0246 protein VV1_0535 of Vibrio vulnificus (strain CMCP6).